The sequence spans 234 residues: N-acetyl-alpha-D-glucosaminyl L-malate deacetylase 1 (234 aa).

Zn(2+) is bound by residues histidine 12, aspartate 15, and histidine 113.

Belongs to the PIGL family. Zn(2+) serves as cofactor.

It carries out the reaction (S)-malyl N-acetyl-alpha-D-glucosaminide + H2O = (S)-malyl alpha-D-glucosaminide + acetate. Its activity is regulated as follows. Inhibited by BSH. In terms of biological role, involved in bacillithiol (BSH) biosynthesis. Catalyzes the second step of the pathway, the deacetylation of N-acetylglucosaminylmalate (GlcNAc-Mal) to glucosamine malate (GlcN-Mal). The chain is N-acetyl-alpha-D-glucosaminyl L-malate deacetylase 1 from Bacillus anthracis.